The following is a 203-amino-acid chain: Ras-related protein Rab5A (203 aa).

18-26 (GDVGTGKSS) is a binding site for GTP. The short motif at 40 to 48 (QESTIGAAF) is the Effector region element. Residues 66–70 (DTAGQ), 124–127 (NKAD), and 154–155 (SA) each bind GTP. 2 S-geranylgeranyl cysteine lipidation sites follow: C201 and C202.

Belongs to the small GTPase superfamily. Rab family. In terms of assembly, interacts with VPS9A. Interacts with NSF and RBP-L. As to expression, highly expressed in roots. Expressed at low levels in shoots, flowers and grains.

Its subcellular location is the prevacuolar compartment membrane. It is found in the golgi apparatus membrane. The protein localises to the cell membrane. The protein resides in the protein storage vacuole membrane. In terms of biological role, plays an important role in intracellular trafficking of seed storage proteins to the protein storage vacuoles (PSVs). Participates in the transport of the proglutelins from the Golgi apparatus to the PSVs in endosperm. Functions cooperatively with VPS9A to regulate post-Golgi dense vesicle-mediated transport of storage proteins to the type II protein bodies (PBII) protein storage vacuoles in developing endosperm. Involved in the maintenance of the general structural organization of the endomembrane system in developing endosperm. Binds GTP in vitro. Forms a quaternary complex with the two glutelin zipcode RNA-binding proteins RBP-L and RBP-P, and the membrane trafficking factor NSF. This quaternay complex carries glutelin mRNAs for active transport on endosomes to the cortical endoplasmic reticulum membrane, and enables endosome-mediated glutelin mRNA transport in endosperm cells. The chain is Ras-related protein Rab5A from Oryza sativa subsp. japonica (Rice).